The sequence spans 210 residues: MQVKNPILGLCQKATFALSAAKVEQCPDDQGYEVAFAGRSNAGKSSALNTLTHASLARTSKTPGRTQLLNFFSLDDERRLVDLPGYGYAKVPIPLKQHWQRHLEAYLGSRECLRGVILMMDVRHPMTDFDKMMLDWARASGMPMHILLTKADKLTHGAGKNTLLKVQSEIRKGWGDGVTIQLFSAPKRLGLEEAYKVLAGWMELEDKPVA.

One can recognise an EngB-type G domain in the interval 30-204; the sequence is QGYEVAFAGR…YKVLAGWMEL (175 aa). Residues 38 to 45, 64 to 68, 82 to 85, 149 to 152, and 182 to 185 each bind GTP; these read GRSNAGKS, GRTQL, DLPG, TKAD, and LFSA. Positions 45 and 66 each coordinate Mg(2+).

Belongs to the TRAFAC class TrmE-Era-EngA-EngB-Septin-like GTPase superfamily. EngB GTPase family. It depends on Mg(2+) as a cofactor.

In terms of biological role, necessary for normal cell division and for the maintenance of normal septation. This is Probable GTP-binding protein EngB from Pseudomonas putida (strain W619).